The sequence spans 129 residues: MTDEWLDTINWSVDGLIPVIAQDENGGKILMVAWMNRDALKRTVETGEAVYWSRSRKKLWHKGEESGHTQIVQAIHLDCDKDVLLLSVEQKGGIACHTGRQSCFFRQLKNGEWVITEPVIKDPSQIYTQ.

Asp78 lines the Mg(2+) pocket. Cys79 is a Zn(2+) binding site. The Mg(2+) site is built by Asp80 and Asp82. Zn(2+) contacts are provided by Cys96 and Cys103.

The protein belongs to the PRA-CH family. In terms of assembly, homodimer. Mg(2+) serves as cofactor. Zn(2+) is required as a cofactor.

Its subcellular location is the cytoplasm. It catalyses the reaction 1-(5-phospho-beta-D-ribosyl)-5'-AMP + H2O = 1-(5-phospho-beta-D-ribosyl)-5-[(5-phospho-beta-D-ribosylamino)methylideneamino]imidazole-4-carboxamide. Its pathway is amino-acid biosynthesis; L-histidine biosynthesis; L-histidine from 5-phospho-alpha-D-ribose 1-diphosphate: step 3/9. In terms of biological role, catalyzes the hydrolysis of the adenine ring of phosphoribosyl-AMP. This Nitrosomonas eutropha (strain DSM 101675 / C91 / Nm57) protein is Phosphoribosyl-AMP cyclohydrolase.